The chain runs to 121 residues: Large ribosomal subunit protein bL19 (121 aa).

This sequence belongs to the bacterial ribosomal protein bL19 family.

This protein is located at the 30S-50S ribosomal subunit interface and may play a role in the structure and function of the aminoacyl-tRNA binding site. The chain is Large ribosomal subunit protein bL19 (rplS) from Chlamydia pneumoniae (Chlamydophila pneumoniae).